A 338-amino-acid chain; its full sequence is Anthranilate phosphoribosyltransferase (338 aa).

5-phospho-alpha-D-ribose 1-diphosphate-binding positions include Gly-81, Gly-84–Asp-85, Thr-89, Asn-91–Thr-94, Lys-109–Ser-117, and Ala-121. Gly-81 is a binding site for anthranilate. Residue Ser-93 participates in Mg(2+) binding. Asn-112 contacts anthranilate. Arg-167 provides a ligand contact to anthranilate. Residues Asp-225 and Glu-226 each coordinate Mg(2+).

It belongs to the anthranilate phosphoribosyltransferase family. As to quaternary structure, homodimer. The cofactor is Mg(2+).

The enzyme catalyses N-(5-phospho-beta-D-ribosyl)anthranilate + diphosphate = 5-phospho-alpha-D-ribose 1-diphosphate + anthranilate. Its pathway is amino-acid biosynthesis; L-tryptophan biosynthesis; L-tryptophan from chorismate: step 2/5. Catalyzes the transfer of the phosphoribosyl group of 5-phosphorylribose-1-pyrophosphate (PRPP) to anthranilate to yield N-(5'-phosphoribosyl)-anthranilate (PRA). The sequence is that of Anthranilate phosphoribosyltransferase from Chelativorans sp. (strain BNC1).